The sequence spans 311 residues: Aquaporin NIP3-1 (311 aa).

The disordered stretch occupies residues 1–34; the sequence is MEMAAPNGGGAAGMSSPVNGASAPATPGTPAPLF. Residues 20-34 show a composition bias toward low complexity; it reads GASAPATPGTPAPLF. The next 2 helical transmembrane spans lie at 85–105 and 111–131; these read LGAE…APIV and GAIS…TIIL. Residues 142 to 144 carry the NPA 1 motif; that stretch reads NPS. The next 3 helical transmembrane spans lie at 158-178, 202-222, and 226-246; these read LQVP…GFAL, AFFT…AVAT, and AVGE…ILIA. The NPA 2 signature appears at 255–257; it reads NPV. The helical transmembrane segment at 273 to 293 threads the bilayer; sequence WIYLIAPTLGAVAGAGVYTAV.

It belongs to the MIP/aquaporin (TC 1.A.8) family. NIP (TC 1.A.8.12) subfamily. In terms of tissue distribution, expressed in roots and leaves.

The protein resides in the membrane. In terms of biological role, aquaporins facilitate the transport of water and small neutral solutes across cell membranes. The chain is Aquaporin NIP3-1 (NIP3-1) from Oryza sativa subsp. japonica (Rice).